Reading from the N-terminus, the 124-residue chain is MPTIQQLVRSERRKIHKKTKSPALQSCPQRRGVCTRVYTTTPKKPNSALRKVARVRLTSGFEVTAYIPGVGHNIQEHSVVLIRGGRIKDLPGVRYHVVRGTLDAAGVKDRRKSRSKYGTKKPKS.

Disordered stretches follow at residues 1-28 (MPTI…QSCP) and 104-124 (AAGV…KPKS). Basic residues-rich tracts occupy residues 11 to 20 (ERRKIHKKTK) and 109 to 124 (DRRK…KPKS).

The protein belongs to the universal ribosomal protein uS12 family. Part of the 30S ribosomal subunit.

It localises to the plastid. It is found in the chloroplast. Functionally, with S4 and S5 plays an important role in translational accuracy. Located at the interface of the 30S and 50S subunits. This Pyropia yezoensis (Susabi-nori) protein is Small ribosomal subunit protein uS12c (rps12).